The following is a 73-amino-acid chain: Ubiquitin-like protein 5 (73 aa).

Residues 1–73 form the Ubiquitin-like domain; it reads MIEITCNDRL…DGMNLELYYQ (73 aa).

It is found in the cytoplasm. This Drosophila melanogaster (Fruit fly) protein is Ubiquitin-like protein 5 (ubl).